The primary structure comprises 341 residues: Methionine import ATP-binding protein MetN (341 aa).

One can recognise an ABC transporter domain in the interval 6–247 (IEIKKLSKNF…PQHQATRHLL (242 aa)). ATP is bound at residue 44-51 (GMSGAGKS).

Belongs to the ABC transporter superfamily. Methionine importer (TC 3.A.1.24) family. The complex is composed of two ATP-binding proteins (MetN), two transmembrane proteins (MetI) and a solute-binding protein (MetQ).

Its subcellular location is the cell inner membrane. The enzyme catalyses L-methionine(out) + ATP + H2O = L-methionine(in) + ADP + phosphate + H(+). It carries out the reaction D-methionine(out) + ATP + H2O = D-methionine(in) + ADP + phosphate + H(+). Its function is as follows. Part of the ABC transporter complex MetNIQ involved in methionine import. Responsible for energy coupling to the transport system. The chain is Methionine import ATP-binding protein MetN from Protochlamydia amoebophila (strain UWE25).